We begin with the raw amino-acid sequence, 275 residues long: NH(3)-dependent NAD(+) synthetase (275 aa).

Residue 46 to 53 coordinates ATP; sequence GISGGQDS. D52 serves as a coordination point for Mg(2+). R140 serves as a coordination point for deamido-NAD(+). ATP is bound at residue T160. E165 contacts Mg(2+). Deamido-NAD(+) is bound by residues K173 and D180. Positions 189 and 211 each coordinate ATP. 260-261 provides a ligand contact to deamido-NAD(+); sequence HK.

Belongs to the NAD synthetase family. In terms of assembly, homodimer.

The catalysed reaction is deamido-NAD(+) + NH4(+) + ATP = AMP + diphosphate + NAD(+) + H(+). It participates in cofactor biosynthesis; NAD(+) biosynthesis; NAD(+) from deamido-NAD(+) (ammonia route): step 1/1. Catalyzes the ATP-dependent amidation of deamido-NAD to form NAD. Uses ammonia as a nitrogen source. In Escherichia coli O7:K1 (strain IAI39 / ExPEC), this protein is NH(3)-dependent NAD(+) synthetase.